The following is a 235-amino-acid chain: Uridylate kinase (235 aa).

12–15 (KISG) lines the ATP pocket. Gly54 is a UMP binding site. The ATP site is built by Gly55 and Arg59. UMP contacts are provided by residues Asp72 and 133-140 (TGNPFFST). ATP contacts are provided by Tyr166 and Asp169.

Belongs to the UMP kinase family. In terms of assembly, homohexamer.

It is found in the cytoplasm. The enzyme catalyses UMP + ATP = UDP + ADP. It functions in the pathway pyrimidine metabolism; CTP biosynthesis via de novo pathway; UDP from UMP (UMPK route): step 1/1. With respect to regulation, inhibited by UTP. In terms of biological role, catalyzes the reversible phosphorylation of UMP to UDP. This is Uridylate kinase from Acetivibrio thermocellus (strain ATCC 27405 / DSM 1237 / JCM 9322 / NBRC 103400 / NCIMB 10682 / NRRL B-4536 / VPI 7372) (Clostridium thermocellum).